Reading from the N-terminus, the 306-residue chain is Acetyl-coenzyme A carboxylase carboxyl transferase subunit beta (306 aa).

The 270-residue stretch at 27 to 296 (LWHKCPSCEA…PRFVAPVIEP (270 aa)) folds into the CoA carboxyltransferase N-terminal domain. Zn(2+)-binding residues include C31, C34, C50, and C53. The C4-type zinc-finger motif lies at 31–53 (CPSCEAVLYRPELEKTLDVCPKC).

The protein belongs to the AccD/PCCB family. In terms of assembly, acetyl-CoA carboxylase is a heterohexamer composed of biotin carboxyl carrier protein (AccB), biotin carboxylase (AccC) and two subunits each of ACCase subunit alpha (AccA) and ACCase subunit beta (AccD). Zn(2+) is required as a cofactor.

The protein resides in the cytoplasm. It catalyses the reaction N(6)-carboxybiotinyl-L-lysyl-[protein] + acetyl-CoA = N(6)-biotinyl-L-lysyl-[protein] + malonyl-CoA. The protein operates within lipid metabolism; malonyl-CoA biosynthesis; malonyl-CoA from acetyl-CoA: step 1/1. Its function is as follows. Component of the acetyl coenzyme A carboxylase (ACC) complex. Biotin carboxylase (BC) catalyzes the carboxylation of biotin on its carrier protein (BCCP) and then the CO(2) group is transferred by the transcarboxylase to acetyl-CoA to form malonyl-CoA. This is Acetyl-coenzyme A carboxylase carboxyl transferase subunit beta from Pseudomonas syringae pv. syringae (strain B728a).